The primary structure comprises 698 residues: Ion-translocating oxidoreductase complex subunit C (698 aa).

4Fe-4S ferredoxin-type domains lie at 366–397 and 407–436; these read TEMG…QQLY and KARN…VQYY. [4Fe-4S] cluster-binding residues include Cys377, Cys380, Cys383, Cys387, Cys416, Cys419, Cys422, and Cys426.

This sequence belongs to the 4Fe4S bacterial-type ferredoxin family. RnfC subfamily. As to quaternary structure, the complex is composed of six subunits: RnfA, RnfB, RnfC, RnfD, RnfE and RnfG. Requires [4Fe-4S] cluster as cofactor.

Its subcellular location is the cell inner membrane. Functionally, part of a membrane-bound complex that couples electron transfer with translocation of ions across the membrane. This Yersinia pseudotuberculosis serotype O:3 (strain YPIII) protein is Ion-translocating oxidoreductase complex subunit C.